The sequence spans 537 residues: Berberine bridge enzyme-like 26 (537 aa).

A signal peptide spans 1–27 (MGISKPLPLFSILVLYFSLYTITPTSS). An intrachain disulfide couples Cys-38 to Cys-102. N-linked (GlcNAc...) asparagine glycosylation occurs at Asn-59. Residues 80–256 (SMPKPGFIFS…LAWKIKLVPV (177 aa)) enclose the FAD-binding PCMH-type domain. A cross-link (6-(S-cysteinyl)-8alpha-(pros-histidyl)-FAD (His-Cys)) is located at residues 117–181 (HDYEGLSYVS…KVHGFPAGLC (65 aa)). N-linked (GlcNAc...) asparagine glycosylation is present at Asn-306.

Belongs to the oxygen-dependent FAD-linked oxidoreductase family. FAD serves as cofactor. The FAD cofactor is bound via a bicovalent 6-S-cysteinyl, 8alpha-N1-histidyl FAD linkage.

The protein resides in the secreted. It localises to the cell wall. This chain is Berberine bridge enzyme-like 26, found in Arabidopsis thaliana (Mouse-ear cress).